Consider the following 20-residue polypeptide: Astacin-like peptidase p18 (20 aa).

The Peptidase M12A domain occupies 1 to 20 (NAIPGNYYRWPYAKVPYVID).

The cofactor is Zn(2+).

Its function is as follows. Active against casein. Has a role as a digestive enzyme. The chain is Astacin-like peptidase p18 from Argiope aurantia (Black-and-yellow garden spider).